We begin with the raw amino-acid sequence, 398 residues long: Serine/threonine-protein phosphatase 4 regulatory subunit 2-B (398 aa).

Residues 138–398 form a disordered region; the sequence is SSEKNTSPSL…NAPEEPMEQD (261 aa). 3 stretches are compositionally biased toward polar residues: residues 139–149, 156–170, and 183–193; these read SEKNTSPSLNR, PSNSQSYTDRSNVNG, and TLSSPMNTNGL. The segment covering 197–211 has biased composition (basic and acidic residues); it reads MENKESDLQQKEKSL. The span at 278 to 294 shows a compositional bias: polar residues; it reads ASTSADKGKESCQTAQT. Residues 338 to 366 are compositionally biased toward low complexity; sequence SESACSLNSEEPNSAAAAASTAGTDSSEG.

The protein belongs to the PPP4R2 family. In terms of assembly, serine/threonine-protein phosphatase 4 (PP4) occurs in different assemblies of the catalytic and one or more regulatory subunits.

Functionally, regulatory subunit of serine/threonine-protein phosphatase 4 (PP4). This is Serine/threonine-protein phosphatase 4 regulatory subunit 2-B (ppp4r2-b) from Xenopus laevis (African clawed frog).